We begin with the raw amino-acid sequence, 415 residues long: uncharacterized protein (415 aa).

The [4Fe-4S] cluster site is built by C66, C72, C75, and C149. S-adenosyl-L-methionine contacts are provided by Q249, F276, E296, and D344. Catalysis depends on C370, which acts as the Nucleophile.

This sequence belongs to the class I-like SAM-binding methyltransferase superfamily. RNA M5U methyltransferase family.

This is an uncharacterized protein from Brucella suis biovar 1 (strain 1330).